The chain runs to 186 residues: Negative modulator of initiation of replication (186 aa).

The tract at residues 93–94 (AV) is interaction with DNA.

This sequence belongs to the SeqA family. In terms of assembly, homodimer. Polymerizes to form helical filaments.

Its subcellular location is the cytoplasm. Its function is as follows. Negative regulator of replication initiation, which contributes to regulation of DNA replication and ensures that replication initiation occurs exactly once per chromosome per cell cycle. Binds to pairs of hemimethylated GATC sequences in the oriC region, thus preventing assembly of replication proteins and re-initiation at newly replicated origins. Repression is relieved when the region becomes fully methylated. In Shewanella halifaxensis (strain HAW-EB4), this protein is Negative modulator of initiation of replication.